A 77-amino-acid polypeptide reads, in one-letter code: MATFDDVKAVVAEQLSIDADAVKMESKIIEDLGADSLDVVELIMALEEKFEVEIPDSDAEKLIKIEDVVNYIDNLKK.

The Carrier domain maps to 1 to 76 (MATFDDVKAV…DVVNYIDNLK (76 aa)). S36 carries the post-translational modification O-(pantetheine 4'-phosphoryl)serine.

Belongs to the acyl carrier protein (ACP) family. Post-translationally, 4'-phosphopantetheine is transferred from CoA to a specific serine of apo-ACP by AcpS. This modification is essential for activity because fatty acids are bound in thioester linkage to the sulfhydryl of the prosthetic group.

Its subcellular location is the cytoplasm. It functions in the pathway lipid metabolism; fatty acid biosynthesis. Functionally, carrier of the growing fatty acid chain in fatty acid biosynthesis. This Campylobacter jejuni subsp. doylei (strain ATCC BAA-1458 / RM4099 / 269.97) protein is Acyl carrier protein.